The primary structure comprises 628 residues: Hemocyanin II (628 aa).

A Blocked amino end (Thr); partial modification is found at threonine 1. The Cu cation site is built by histidine 173, histidine 177, histidine 204, histidine 324, histidine 328, and histidine 364. An N-linked (GlcNAc...) asparagine glycan is attached at asparagine 449. 2 disulfide bridges follow: cysteine 534–cysteine 576 and cysteine 536–cysteine 583.

Belongs to the tyrosinase family. Hemocyanin subfamily. In terms of assembly, hexamer or a multiple thereof. In terms of tissue distribution, hemolymph.

The protein resides in the secreted. It is found in the extracellular space. Its function is as follows. Hemocyanins are copper-containing oxygen carriers occurring freely dissolved in the hemolymph of many mollusks and arthropods. The polypeptide is Hemocyanin II (Limulus polyphemus (Atlantic horseshoe crab)).